Consider the following 355-residue polypeptide: 3-isopropylmalate dehydrogenase (355 aa).

78–91 (GYKWDNLPRPERPE) contributes to the NAD(+) binding site. Substrate is bound by residues Arg-98, Arg-136, and Asp-226. The Mg(2+) site is built by Asp-226, Asp-250, and Asp-254. 284 to 296 (GSAPDIAGQDKAN) serves as a coordination point for NAD(+).

This sequence belongs to the isocitrate and isopropylmalate dehydrogenases family. LeuB type 1 subfamily. In terms of assembly, homodimer. Requires Mg(2+) as cofactor. Mn(2+) serves as cofactor.

It is found in the cytoplasm. It catalyses the reaction (2R,3S)-3-isopropylmalate + NAD(+) = 4-methyl-2-oxopentanoate + CO2 + NADH. It participates in amino-acid biosynthesis; L-leucine biosynthesis; L-leucine from 3-methyl-2-oxobutanoate: step 3/4. Catalyzes the oxidation of 3-carboxy-2-hydroxy-4-methylpentanoate (3-isopropylmalate) to 3-carboxy-4-methyl-2-oxopentanoate. The product decarboxylates to 4-methyl-2 oxopentanoate. The sequence is that of 3-isopropylmalate dehydrogenase (leuB) from Arthrospira platensis (Spirulina platensis).